A 375-amino-acid chain; its full sequence is Succinyl-diaminopimelate desuccinylase (375 aa).

Residue His-66 coordinates Zn(2+). Asp-68 is a catalytic residue. Asp-99 lines the Zn(2+) pocket. The active-site Proton acceptor is the Glu-133. Zn(2+) contacts are provided by Glu-134, Glu-162, and His-348.

The protein belongs to the peptidase M20A family. DapE subfamily. Homodimer. It depends on Zn(2+) as a cofactor. Co(2+) serves as cofactor.

The enzyme catalyses N-succinyl-(2S,6S)-2,6-diaminopimelate + H2O = (2S,6S)-2,6-diaminopimelate + succinate. Its pathway is amino-acid biosynthesis; L-lysine biosynthesis via DAP pathway; LL-2,6-diaminopimelate from (S)-tetrahydrodipicolinate (succinylase route): step 3/3. Functionally, catalyzes the hydrolysis of N-succinyl-L,L-diaminopimelic acid (SDAP), forming succinate and LL-2,6-diaminopimelate (DAP), an intermediate involved in the bacterial biosynthesis of lysine and meso-diaminopimelic acid, an essential component of bacterial cell walls. The polypeptide is Succinyl-diaminopimelate desuccinylase (Escherichia coli O1:K1 / APEC).